The chain runs to 152 residues: Large ribosomal subunit protein uL30 (152 aa).

It belongs to the universal ribosomal protein uL30 family. In terms of assembly, part of the 50S ribosomal subunit.

The sequence is that of Large ribosomal subunit protein uL30 from Methanobrevibacter smithii (strain ATCC 35061 / DSM 861 / OCM 144 / PS).